The primary structure comprises 456 residues: Signal recognition particle receptor FtsY (456 aa).

The segment covering 1–26 (MFDGLKKKLNRFRNDVEETAEEKAEA) has biased composition (basic and acidic residues). The tract at residues 1-163 (MFDGLKKKLN…DEDDSSGPGR (163 aa)) is disordered. Positions 27 to 39 (AADEAESDADAEA) are enriched in acidic residues. Residues 40-62 (ESAPADTDNAAVEPEASEPAAAD) show a composition bias toward low complexity. Residues 63-81 (PDADAVGDADAGSEADAVD) show a composition bias toward acidic residues. Residues 82–97 (AADAPADAESSSAAVE) show a composition bias toward low complexity. Residues 112 to 134 (PDSEVDAGADTGDEPSGEPTADE) show a composition bias toward acidic residues. Residues 265 to 272 (GINGVGKT), 347 to 351 (DTAGR), and 405 to 408 (TKAD) contribute to the GTP site.

This sequence belongs to the GTP-binding SRP family. FtsY subfamily. As to quaternary structure, part of the signal recognition particle protein translocation system, which is composed of SRP and FtsY.

It is found in the cell membrane. Its subcellular location is the cytoplasm. The enzyme catalyses GTP + H2O = GDP + phosphate + H(+). In terms of biological role, involved in targeting and insertion of nascent membrane proteins into the cytoplasmic membrane. Acts as a receptor for the complex formed by the signal recognition particle (SRP) and the ribosome-nascent chain (RNC). This is Signal recognition particle receptor FtsY from Haloferax volcanii (strain ATCC 29605 / DSM 3757 / JCM 8879 / NBRC 14742 / NCIMB 2012 / VKM B-1768 / DS2) (Halobacterium volcanii).